The chain runs to 250 residues: Ribonuclease HII (250 aa).

The RNase H type-2 domain occupies 66–250 (ELVAGVDEVG…TFAPVSDFFK (185 aa)). Aspartate 72, glutamate 73, and aspartate 164 together coordinate a divalent metal cation.

This sequence belongs to the RNase HII family. Requires Mn(2+) as cofactor. Mg(2+) is required as a cofactor.

Its subcellular location is the cytoplasm. The enzyme catalyses Endonucleolytic cleavage to 5'-phosphomonoester.. Its function is as follows. Endonuclease that specifically degrades the RNA of RNA-DNA hybrids. The sequence is that of Ribonuclease HII from Lactobacillus helveticus (strain DPC 4571).